The primary structure comprises 254 residues: Serotonin N-acetyltransferase 1, chloroplastic (254 aa).

The transit peptide at 1–83 (MASAASASAS…NSTETVEPPS (83 aa)) directs the protein to the chloroplast. The region spanning 119-254 (VNVYDLQALC…IKGMFWYPRF (136 aa)) is the N-acetyltransferase domain.

The protein resides in the plastid. The protein localises to the chloroplast. It is found in the nucleus. The catalysed reaction is a 2-arylethylamine + acetyl-CoA = an N-acetyl-2-arylethylamine + CoA + H(+). It participates in aromatic compound metabolism; melatonin biosynthesis; melatonin from serotonin: step 1/2. In terms of biological role, catalyzes the N-acetylation of serotonin into N-acetylserotonin, the penultimate step in the synthesis of melatonin. Catalyzes in vitro the N-acetylation of tryptamine to produce N-acetyltryptamine, 5-methoxytryptamine to produce melatonin and tyramine to produce N-acetyltyramine. Acetyltransferase required for geminivirus infection and systemic spread. In Oryza sativa subsp. indica (Rice), this protein is Serotonin N-acetyltransferase 1, chloroplastic.